Here is a 246-residue protein sequence, read N- to C-terminus: Virulence plasmid protein pGP6-D (246 aa).

It belongs to the UPF0137 (pGP6-D) family.

This is Virulence plasmid protein pGP6-D from Chlamydia psittaci (Chlamydophila psittaci).